Here is a 416-residue protein sequence, read N- to C-terminus: D-amino acid dehydrogenase (416 aa).

3 to 17 (ITILGSGVIGVTTAY) contacts FAD.

The protein belongs to the DadA oxidoreductase family. The cofactor is FAD.

It catalyses the reaction a D-alpha-amino acid + A + H2O = a 2-oxocarboxylate + AH2 + NH4(+). It participates in amino-acid degradation; D-alanine degradation; NH(3) and pyruvate from D-alanine: step 1/1. In terms of biological role, oxidative deamination of D-amino acids. The polypeptide is D-amino acid dehydrogenase (Brucella anthropi (strain ATCC 49188 / DSM 6882 / CCUG 24695 / JCM 21032 / LMG 3331 / NBRC 15819 / NCTC 12168 / Alc 37) (Ochrobactrum anthropi)).